The primary structure comprises 96 residues: Co-chaperonin GroES (96 aa).

This sequence belongs to the GroES chaperonin family. Heptamer of 7 subunits arranged in a ring. Interacts with the chaperonin GroEL.

Its subcellular location is the cytoplasm. Together with the chaperonin GroEL, plays an essential role in assisting protein folding. The GroEL-GroES system forms a nano-cage that allows encapsulation of the non-native substrate proteins and provides a physical environment optimized to promote and accelerate protein folding. GroES binds to the apical surface of the GroEL ring, thereby capping the opening of the GroEL channel. The sequence is that of Co-chaperonin GroES from Streptococcus pyogenes serotype M18 (strain MGAS8232).